The chain runs to 301 residues: Lipoyl synthase (301 aa).

Residues cysteine 37, cysteine 42, cysteine 48, cysteine 63, cysteine 67, cysteine 70, and serine 276 each contribute to the [4Fe-4S] cluster site. A Radical SAM core domain is found at 49–265; it reads WSKKHATVMI…ERIARTKGFL (217 aa).

Belongs to the radical SAM superfamily. Lipoyl synthase family. The cofactor is [4Fe-4S] cluster.

It is found in the cytoplasm. The enzyme catalyses [[Fe-S] cluster scaffold protein carrying a second [4Fe-4S](2+) cluster] + N(6)-octanoyl-L-lysyl-[protein] + 2 oxidized [2Fe-2S]-[ferredoxin] + 2 S-adenosyl-L-methionine + 4 H(+) = [[Fe-S] cluster scaffold protein] + N(6)-[(R)-dihydrolipoyl]-L-lysyl-[protein] + 4 Fe(3+) + 2 hydrogen sulfide + 2 5'-deoxyadenosine + 2 L-methionine + 2 reduced [2Fe-2S]-[ferredoxin]. It participates in protein modification; protein lipoylation via endogenous pathway; protein N(6)-(lipoyl)lysine from octanoyl-[acyl-carrier-protein]: step 2/2. In terms of biological role, catalyzes the radical-mediated insertion of two sulfur atoms into the C-6 and C-8 positions of the octanoyl moiety bound to the lipoyl domains of lipoate-dependent enzymes, thereby converting the octanoylated domains into lipoylated derivatives. This chain is Lipoyl synthase, found in Rickettsia felis (strain ATCC VR-1525 / URRWXCal2) (Rickettsia azadi).